A 223-amino-acid chain; its full sequence is Cytotoxic T-lymphocyte protein 4 (223 aa).

The first 35 residues, 1 to 35 (MAGFGFRRHGVQPDLASRTWPCTALFSLLFIPVFS), serve as a signal peptide directing secretion. The Extracellular portion of the chain corresponds to 36–161 (KGMHAAQPAV…IDPEPCPDSD (126 aa)). The region spanning 39–140 (HAAQPAVVLA…VELMYPPPYY (102 aa)) is the Ig-like V-type domain. A homodimerization region spans residues 46–50 (VLASS). Cystine bridges form between C58/C129 and C85/C103. An N-linked (GlcNAc...) asparagine glycan is attached at N113. Residues 134–139 (MYPPPY) are important for interaction with CD80 and CD86. N145 is a glycosylation site (N-linked (GlcNAc...) asparagine). Positions 150–155 (YVIDPE) are homodimerization. Residues 162–182 (FLLWILAAVSSGLFFYSFLIT) form a helical membrane-spanning segment. Residues 183-223 (AVSLSKMLKKRSPLTTGVYVKMPPTGPECEKQFQPYFIPIN) lie on the Cytoplasmic side of the membrane. A Phosphotyrosine; by TXK and JAK2 modification is found at Y201.

Homodimer; disulfide-linked. Binds to CD80/B7-1 and CD86/B7.2. Interacts with ICOSLG. In terms of processing, N-glycosylation is important for dimerization. Post-translationally, phosphorylation at Tyr-201 prevents binding to the AP-2 adapter complex, blocks endocytosis, and leads to retention of CTLA4 on the cell surface.

Its subcellular location is the cell membrane. Functionally, inhibitory receptor acting as a major negative regulator of T-cell responses. The affinity of CTLA4 for its natural B7 family ligands, CD80 and CD86, is considerably stronger than the affinity of their cognate stimulatory coreceptor CD28. This chain is Cytotoxic T-lymphocyte protein 4 (CTLA4), found in Canis lupus familiaris (Dog).